We begin with the raw amino-acid sequence, 216 residues long: Protein GrpE (216 aa).

2 disordered regions span residues 1-45 and 185-216; these read MTEE…LDPT and RVAV…TEEV. Over residues 205–216 the composition is skewed to acidic residues; it reads TDDEESGGTEEV.

The protein belongs to the GrpE family. Homodimer.

It is found in the cytoplasm. In terms of biological role, participates actively in the response to hyperosmotic and heat shock by preventing the aggregation of stress-denatured proteins, in association with DnaK and GrpE. It is the nucleotide exchange factor for DnaK and may function as a thermosensor. Unfolded proteins bind initially to DnaJ; upon interaction with the DnaJ-bound protein, DnaK hydrolyzes its bound ATP, resulting in the formation of a stable complex. GrpE releases ADP from DnaK; ATP binding to DnaK triggers the release of the substrate protein, thus completing the reaction cycle. Several rounds of ATP-dependent interactions between DnaJ, DnaK and GrpE are required for fully efficient folding. The protein is Protein GrpE of Streptomyces griseus subsp. griseus (strain JCM 4626 / CBS 651.72 / NBRC 13350 / KCC S-0626 / ISP 5235).